We begin with the raw amino-acid sequence, 236 residues long: Purine nucleoside phosphorylase DeoD-type (236 aa).

Residue His5 participates in a purine D-ribonucleoside binding. Phosphate is bound by residues Gly21, Arg25, Arg44, and 88-91 (RVGT). A purine D-ribonucleoside-binding positions include 180–182 (EME) and 204–205 (SD). Asp205 functions as the Proton donor in the catalytic mechanism.

This sequence belongs to the PNP/UDP phosphorylase family. In terms of assembly, homohexamer; trimer of homodimers.

The catalysed reaction is a purine D-ribonucleoside + phosphate = a purine nucleobase + alpha-D-ribose 1-phosphate. It carries out the reaction a purine 2'-deoxy-D-ribonucleoside + phosphate = a purine nucleobase + 2-deoxy-alpha-D-ribose 1-phosphate. Functionally, catalyzes the reversible phosphorolytic breakdown of the N-glycosidic bond in the beta-(deoxy)ribonucleoside molecules, with the formation of the corresponding free purine bases and pentose-1-phosphate. The chain is Purine nucleoside phosphorylase DeoD-type from Shewanella denitrificans (strain OS217 / ATCC BAA-1090 / DSM 15013).